Here is a 511-residue protein sequence, read N- to C-terminus: Ectonucleoside triphosphate diphosphohydrolase 1 (511 aa).

Over 1–16 the chain is Cytoplasmic; that stretch reads MEDIKDSKVKRFCSKN. The helical transmembrane segment at 17–37 threads the bilayer; it reads ILIILGFSSVLAVIALIAVGL. The Extracellular segment spans residues 38-478; the sequence is THNKPLPENV…LSPPLPHSTY (441 aa). The segment at 46-171 is N-terminal lobe; it reads NVKYGIVLDA…DFQGAKIITG (126 aa). Asparagine 73 carries an N-linked (GlcNAc...) asparagine glycan. Residues cysteine 84 and cysteine 108 are joined by a disulfide bond. Catalysis depends on glutamate 174, which acts as the Proton acceptor. The interval 205 to 441 is C-terminal lobe; that stretch reads QATFGALDLG…GTSWDQIHFM (237 aa). Residues asparagine 226, asparagine 291, and asparagine 333 are each glycosylated (N-linked (GlcNAc...) asparagine). 2 disulfide bridges follow: cysteine 254/cysteine 300 and cysteine 281/cysteine 324. Cysteines 337 and 342 form a disulfide. A glycan (N-linked (GlcNAc...) asparagine) is linked at asparagine 374. A disulfide bridge connects residues cysteine 391 and cysteine 414. N-linked (GlcNAc...) asparagine glycosylation is found at asparagine 429 and asparagine 458. The helical transmembrane segment at 479-499 threads the bilayer; that stretch reads ISLMVLFSLVLVAMVITGLFI. The Cytoplasmic segment spans residues 500-511; it reads FSKPSYFWKEAV.

It belongs to the GDA1/CD39 NTPase family. Homodimer; disulfide-linked. The cofactor is Ca(2+). It depends on Mg(2+) as a cofactor. Post-translationally, N-glycosylated. In terms of processing, the N-terminus is blocked. Palmitoylated on Cys-13; which is required for caveola targeting. As to expression, expressed in primary neurons and astrocytes, kidney, liver, muscle, thymus, lung and spleen.

It localises to the membrane. The protein localises to the caveola. It catalyses the reaction a ribonucleoside 5'-triphosphate + 2 H2O = a ribonucleoside 5'-phosphate + 2 phosphate + 2 H(+). The enzyme catalyses a ribonucleoside 5'-triphosphate + H2O = a ribonucleoside 5'-diphosphate + phosphate + H(+). It carries out the reaction a ribonucleoside 5'-diphosphate + H2O = a ribonucleoside 5'-phosphate + phosphate + H(+). The catalysed reaction is ATP + 2 H2O = AMP + 2 phosphate + 2 H(+). It catalyses the reaction ATP + H2O = ADP + phosphate + H(+). The enzyme catalyses ADP + H2O = AMP + phosphate + H(+). It carries out the reaction CTP + 2 H2O = CMP + 2 phosphate + 2 H(+). The catalysed reaction is CTP + H2O = CDP + phosphate + H(+). It catalyses the reaction CDP + H2O = CMP + phosphate + H(+). The enzyme catalyses GTP + 2 H2O = GMP + 2 phosphate + 2 H(+). It carries out the reaction GTP + H2O = GDP + phosphate + H(+). The catalysed reaction is GDP + H2O = GMP + phosphate + H(+). It catalyses the reaction ITP + 2 H2O = IMP + 2 phosphate + 2 H(+). The enzyme catalyses ITP + H2O = IDP + phosphate + H(+). It carries out the reaction IDP + H2O = IMP + phosphate + H(+). The catalysed reaction is UTP + 2 H2O = UMP + 2 phosphate + 2 H(+). It catalyses the reaction UTP + H2O = UDP + phosphate + H(+). The enzyme catalyses UDP + H2O = UMP + phosphate + H(+). In terms of biological role, catalyzes the hydrolysis of both di- and triphosphate nucleotides (NDPs and NTPs) and hydrolyze NTPs to nucleotide monophosphates (NMPs) in two distinct successive phosphate-releasing steps, with NDPs as intermediates and participates in the regulation of extracellular levels of nucleotides. By hydrolyzing proinflammatory ATP and platelet-activating ADP to AMP, it blocks platelet aggregation and supports blood flow. The chain is Ectonucleoside triphosphate diphosphohydrolase 1 from Rattus norvegicus (Rat).